Here is a 470-residue protein sequence, read N- to C-terminus: MRMKGLYVVPLLLALVESAQKSDLGGDASAALINHSPMLIHRLQDLLQNSNSSDTTLRIRTANSNEVKVIHTHQLLLTLQSDIFEGLLLNQSEVTLQEPAECAAVFEKFIRYFYCGEISVNLNQAIPLHRLASKYHVTALQRGITEYMKTHFASESSQGHVVSWYHYALRMGDITLQESCLKFLAWNLSTVMSSNEWVTVSDNLMVSLLQRSDLVLQSELELFNAVEEWVSKKNPDVPVIEKVLRAIRYPMITPSQLFQIQKKSVVLASYHNSVQDLMFQAFQFHSASPLHFAKYFEVNCSMFVPRNYLSPSWGSQWIINNPARDDRSLTFQTQLGPSNHDTSKKITWNALFSPRWIPVSLRPVYSESVSSSSQSNRLEEGKPRLVMTSAMSGMDFAGVTFQKTVLVGVKRQQGKVFIKHVYNVHQSTDEVFDFLLNADLQKRTSEYLIDNSLHLHIIIKPIYHSLIKAK.

An N-terminal signal peptide occupies residues 1–18 (MRMKGLYVVPLLLALVES). The 70-residue stretch at 53–122 (SDTTLRIRTA…FYCGEISVNL (70 aa)) folds into the BTB domain. A BACK domain is found at 161 to 261 (VVSWYHYALR…ITPSQLFQIQ (101 aa)).

The protein resides in the secreted. The polypeptide is BTB/POZ domain-containing protein 17 (btbd17) (Xenopus laevis (African clawed frog)).